A 90-amino-acid polypeptide reads, in one-letter code: Putative Fis-like DNA-binding protein (90 aa).

The H-T-H motif DNA-binding region spans 66-85; the sequence is QSRAAALLGIHRATLRKKLK.

This sequence belongs to the transcriptional regulatory Fis family.

In Xylella fastidiosa (strain Temecula1 / ATCC 700964), this protein is Putative Fis-like DNA-binding protein.